The chain runs to 418 residues: Gamma-glutamyl phosphate reductase (418 aa).

Belongs to the gamma-glutamyl phosphate reductase family.

The protein localises to the cytoplasm. It catalyses the reaction L-glutamate 5-semialdehyde + phosphate + NADP(+) = L-glutamyl 5-phosphate + NADPH + H(+). It participates in amino-acid biosynthesis; L-proline biosynthesis; L-glutamate 5-semialdehyde from L-glutamate: step 2/2. In terms of biological role, catalyzes the NADPH-dependent reduction of L-glutamate 5-phosphate into L-glutamate 5-semialdehyde and phosphate. The product spontaneously undergoes cyclization to form 1-pyrroline-5-carboxylate. The polypeptide is Gamma-glutamyl phosphate reductase (Photobacterium profundum (strain SS9)).